Consider the following 89-residue polypeptide: Small ribosomal subunit protein bS16 (89 aa).

It belongs to the bacterial ribosomal protein bS16 family.

This Gloeobacter violaceus (strain ATCC 29082 / PCC 7421) protein is Small ribosomal subunit protein bS16.